A 313-amino-acid chain; its full sequence is Ribosomal RNA small subunit methyltransferase H (313 aa).

Residues Gly35–His37, Asp55, Phe81, Asp103, and Gln110 each bind S-adenosyl-L-methionine.

It belongs to the methyltransferase superfamily. RsmH family.

Its subcellular location is the cytoplasm. The catalysed reaction is cytidine(1402) in 16S rRNA + S-adenosyl-L-methionine = N(4)-methylcytidine(1402) in 16S rRNA + S-adenosyl-L-homocysteine + H(+). Functionally, specifically methylates the N4 position of cytidine in position 1402 (C1402) of 16S rRNA. The protein is Ribosomal RNA small subunit methyltransferase H of Azotobacter vinelandii (strain DJ / ATCC BAA-1303).